The following is a 281-amino-acid chain: 2,3,4,5-tetrahydropyridine-2,6-dicarboxylate N-succinyltransferase (281 aa).

Positions 108 and 145 each coordinate substrate.

Belongs to the transferase hexapeptide repeat family. As to quaternary structure, homotrimer.

The protein localises to the cytoplasm. The catalysed reaction is (S)-2,3,4,5-tetrahydrodipicolinate + succinyl-CoA + H2O = (S)-2-succinylamino-6-oxoheptanedioate + CoA. The protein operates within amino-acid biosynthesis; L-lysine biosynthesis via DAP pathway; LL-2,6-diaminopimelate from (S)-tetrahydrodipicolinate (succinylase route): step 1/3. This Bradyrhizobium diazoefficiens (strain JCM 10833 / BCRC 13528 / IAM 13628 / NBRC 14792 / USDA 110) protein is 2,3,4,5-tetrahydropyridine-2,6-dicarboxylate N-succinyltransferase.